A 1234-amino-acid chain; its full sequence is DNA-directed RNA polymerase subunit beta (1234 aa).

Belongs to the RNA polymerase beta chain family. In terms of assembly, the RNAP catalytic core consists of 2 alpha, 1 beta, 1 beta' and 1 omega subunit. When a sigma factor is associated with the core the holoenzyme is formed, which can initiate transcription.

It carries out the reaction RNA(n) + a ribonucleoside 5'-triphosphate = RNA(n+1) + diphosphate. Its function is as follows. DNA-dependent RNA polymerase catalyzes the transcription of DNA into RNA using the four ribonucleoside triphosphates as substrates. The protein is DNA-directed RNA polymerase subunit beta of Clostridium perfringens (strain SM101 / Type A).